A 386-amino-acid polypeptide reads, in one-letter code: MGMQMKNSKKMMTLMALCLSVAITTSGYATTLPDIPEPLKNGTGAIDNNGVIYVGLGSAGTSWYKIDLKKQHKDWERIKSFPGGAREQSVSVFLNGELYVFGGVGKESNEAPLQVYSDVYKYTPAKNTWQKVNTISPVGLTGHTVVKLNETMALITGGVNEHIFDKYFIDIAAAAGDDSEKNRVIYNYFNKPSKDYFFNKIVFIYNAKENTWENAGELPGAGTAGSSSAMENNSLTLINGELKPGLRTDVIYRAIWDNDKLTWLKNSQLPPSPGEQHQEGLAGAFSGYSQGVLLVGGGANFPGAKQNYTDGKFYAHEGINKKWRDEVYGLINGHWQYVGKMKQPLGYGVSVNYGDEIFLIGGENAKGKPVSSVISFAMHDGKLLIE.

The signal sequence occupies residues 1 to 29 (MGMQMKNSKKMMTLMALCLSVAITTSGYA). 7 Kelch repeats span residues 51 to 95 (VIYV…VFLN), 97 to 149 (ELYV…VKLN), 151 to 186 (TMAL…RVIY), 187 to 232 (NYFN…AMEN), 235 to 284 (LTLI…LAGA), 306 to 355 (QNYT…NYGD), and 357 to 386 (IFLI…LLIE). The active-site Proton acceptor is the Glu241.

The protein belongs to the NanM family. Homodimer.

It localises to the periplasm. It catalyses the reaction N-acetyl-alpha-neuraminate = N-acetyl-beta-neuraminate. In terms of biological role, converts alpha-N-acetylneuranimic acid (Neu5Ac) to the beta-anomer, accelerating the equilibrium between the alpha- and beta-anomers. Probably facilitates sialidase-negative bacteria to compete successfully for limited amounts of extracellular Neu5Ac, which is likely taken up in the beta-anomer. In addition, the rapid removal of sialic acid from solution might be advantageous to the bacterium to damp down host responses. The protein is N-acetylneuraminate epimerase of Salmonella arizonae (strain ATCC BAA-731 / CDC346-86 / RSK2980).